Consider the following 459-residue polypeptide: Cysteine--tRNA ligase (459 aa).

Cysteine 27 contributes to the Zn(2+) binding site. Residues 29–39 carry the 'HIGH' region motif; that stretch reads VTVYDDCHIGH. Cysteine 208, histidine 233, and glutamate 237 together coordinate Zn(2+). The 'KMSKS' region signature appears at 265–269; sequence KMSKS. Residue lysine 268 coordinates ATP.

This sequence belongs to the class-I aminoacyl-tRNA synthetase family. In terms of assembly, monomer. Requires Zn(2+) as cofactor.

It localises to the cytoplasm. It catalyses the reaction tRNA(Cys) + L-cysteine + ATP = L-cysteinyl-tRNA(Cys) + AMP + diphosphate. The polypeptide is Cysteine--tRNA ligase (Francisella tularensis subsp. mediasiatica (strain FSC147)).